A 756-amino-acid polypeptide reads, in one-letter code: MSAKNAKKQPNNSVEFLIDDDYGITEAIATLDNGDFGTRTIRFETGQLARQAGGSVTTYLDEDTMLLSTTTASNQPREGFDFFPLTVDVEERMYAAGKIPGSFFRREGRPSTEAILACRLIDRPLRPTFVKGLRNEVQVVVTVLSMDPEEYYDVVAINGASASTQLSGLPVSGPVGGVRMALIADDKHPKGQWVAFPNNEQHERALFEMVVAGRIVKKGRKDDVAIMMVEAGAGVNVAERIKEGAPAPQESTVAEGLEAAKPFIKSLCEAQAGLAERAAKETQEFPLFPPYGDDVYAAVEKAASKKLEKLLTIPGKQDRDDATNEYMEQVEAKLIEDFDDLDEADASKQIRNAFNAVMKDIVRTKILTEGFRIDGRGVTDIRDLGVEVDLIPRAHGSSLFERGETQILGVTTLDMLKMEQQIDSLTPVESKRYMHHYNFPPYSTGETGRVGSPKRREIGHGALAERALLPVIPSREDFPYAIRQVSEALGSNGSTSMGSVCASTLSLYNAGVPLKAPVAGIAMGLVSGEVNGKEKFVALTDILGAEDAFGDMDFKVAGTSEFITALQLDTKLDGIPSHVLADALEQARDARAAILDTMSEVIESPDEMSGLAPRITSVTIPVNKIGELIGPKGKTINAITEETGADVSIEEDGTVYISAATGEAADAAIDRVNSIANPQLPKVGERFLGTVVKTVAFGAFVSLTPGRDGLVHISKLGGDERIEKVEDVVNVGDKIQVEIADIDNRGKISLVPVEED.

Positions 547 and 553 each coordinate Mg(2+). Positions proline 613 to valine 672 constitute a KH domain. The 70-residue stretch at glycine 684 to valine 753 folds into the S1 motif domain.

The protein belongs to the polyribonucleotide nucleotidyltransferase family. The cofactor is Mg(2+).

The protein localises to the cytoplasm. The catalysed reaction is RNA(n+1) + phosphate = RNA(n) + a ribonucleoside 5'-diphosphate. Functionally, involved in mRNA degradation. Catalyzes the phosphorolysis of single-stranded polyribonucleotides processively in the 3'- to 5'-direction. In Corynebacterium aurimucosum (strain ATCC 700975 / DSM 44827 / CIP 107346 / CN-1) (Corynebacterium nigricans), this protein is Polyribonucleotide nucleotidyltransferase.